We begin with the raw amino-acid sequence, 366 residues long: 5-formaminoimidazole-4-carboxamide-1-(beta)-D-ribofuranosyl 5'-monophosphate synthetase (366 aa).

Residues histidine 27 and serine 96 each contribute to the 5-amino-1-(5-phospho-beta-D-ribosyl)imidazole-4-carboxamide site. An ATP-grasp domain is found at 131 to 357 (RKWLEDAGVP…IAREIKEAVK (227 aa)). ATP contacts are provided by residues 154–208 (PVIV…VRFY) and glutamate 239. A 5-amino-1-(5-phospho-beta-D-ribosyl)imidazole-4-carboxamide-binding site is contributed by asparagine 263. 2 residues coordinate Mg(2+): glutamate 302 and glutamate 315.

It belongs to the phosphohexose mutase family. Requires Mg(2+) as cofactor. It depends on Mn(2+) as a cofactor.

It catalyses the reaction 5-amino-1-(5-phospho-beta-D-ribosyl)imidazole-4-carboxamide + formate + ATP = 5-formamido-1-(5-phospho-D-ribosyl)imidazole-4-carboxamide + ADP + phosphate. It functions in the pathway purine metabolism; IMP biosynthesis via de novo pathway; 5-formamido-1-(5-phospho-D-ribosyl)imidazole-4-carboxamide from 5-amino-1-(5-phospho-D-ribosyl)imidazole-4-carboxamide (formate route): step 1/1. Its function is as follows. Catalyzes the ATP- and formate-dependent formylation of 5-aminoimidazole-4-carboxamide-1-beta-d-ribofuranosyl 5'-monophosphate (AICAR) to 5-formaminoimidazole-4-carboxamide-1-beta-d-ribofuranosyl 5'-monophosphate (FAICAR) in the absence of folates. In Korarchaeum cryptofilum (strain OPF8), this protein is 5-formaminoimidazole-4-carboxamide-1-(beta)-D-ribofuranosyl 5'-monophosphate synthetase.